The primary structure comprises 287 residues: Shikimate dehydrogenase (NADP(+)) (287 aa).

Residues 20–22 and threonine 67 contribute to the shikimate site; that span reads SRS. Catalysis depends on lysine 71, which acts as the Proton acceptor. Glutamate 84 lines the NADP(+) pocket. The shikimate site is built by asparagine 93 and aspartate 108. NADP(+) contacts are provided by residues 132 to 136 and methionine 226; that span reads GAGGA. Tyrosine 228 lines the shikimate pocket. Glycine 250 is an NADP(+) binding site.

This sequence belongs to the shikimate dehydrogenase family. In terms of assembly, homodimer.

It carries out the reaction shikimate + NADP(+) = 3-dehydroshikimate + NADPH + H(+). Its pathway is metabolic intermediate biosynthesis; chorismate biosynthesis; chorismate from D-erythrose 4-phosphate and phosphoenolpyruvate: step 4/7. Involved in the biosynthesis of the chorismate, which leads to the biosynthesis of aromatic amino acids. Catalyzes the reversible NADPH linked reduction of 3-dehydroshikimate (DHSA) to yield shikimate (SA). In Bordetella petrii (strain ATCC BAA-461 / DSM 12804 / CCUG 43448), this protein is Shikimate dehydrogenase (NADP(+)).